We begin with the raw amino-acid sequence, 276 residues long: Dermonecrotic toxin LarSicTox-alphaIB2c (276 aa).

The active site involves His-5. Mg(2+)-binding residues include Glu-25 and Asp-27. Catalysis depends on His-41, which acts as the Nucleophile. 2 cysteine pairs are disulfide-bonded: Cys-45–Cys-51 and Cys-47–Cys-190. Asp-85 provides a ligand contact to Mg(2+). Asn-253 carries an N-linked (GlcNAc...) asparagine glycan.

Belongs to the arthropod phospholipase D family. Class II subfamily. Requires Mg(2+) as cofactor. In terms of tissue distribution, expressed by the venom gland.

The protein resides in the secreted. The enzyme catalyses an N-(acyl)-sphingosylphosphocholine = an N-(acyl)-sphingosyl-1,3-cyclic phosphate + choline. It catalyses the reaction an N-(acyl)-sphingosylphosphoethanolamine = an N-(acyl)-sphingosyl-1,3-cyclic phosphate + ethanolamine. The catalysed reaction is a 1-acyl-sn-glycero-3-phosphocholine = a 1-acyl-sn-glycero-2,3-cyclic phosphate + choline. It carries out the reaction a 1-acyl-sn-glycero-3-phosphoethanolamine = a 1-acyl-sn-glycero-2,3-cyclic phosphate + ethanolamine. Dermonecrotic toxins cleave the phosphodiester linkage between the phosphate and headgroup of certain phospholipids (sphingolipid and lysolipid substrates), forming an alcohol (often choline) and a cyclic phosphate. This toxin acts on sphingomyelin (SM). It may also act on ceramide phosphoethanolamine (CPE), lysophosphatidylcholine (LPC) and lysophosphatidylethanolamine (LPE), but not on lysophosphatidylserine (LPS), and lysophosphatidylglycerol (LPG). It acts by transphosphatidylation, releasing exclusively cyclic phosphate products as second products. Induces dermonecrosis, hemolysis, increased vascular permeability, edema, inflammatory response, and platelet aggregation. The protein is Dermonecrotic toxin LarSicTox-alphaIB2c of Loxosceles arizonica (Arizona brown spider).